We begin with the raw amino-acid sequence, 87 residues long: Protein L (87 aa).

Functionally, this protein inhibits the multiplication of double-stranded DNA phages, such as P1 and lambda. The sequence is that of Protein L (L) from Escherichia coli.